The chain runs to 279 residues: GATA transcription factor 15 (279 aa).

Residues 52-94 (AYDDHSTVTTSPSSPSSSSTGSVDCTLSLGTPSSRRAEPVAAA) form a disordered region. Positions 58–74 (TVTTSPSSPSSSSTGSV) are enriched in low complexity. Residues 154-179 (CANCGTASTPLWRNGPRGPKSLCNAC) form a GATA-type zinc finger.

Belongs to the type IV zinc-finger family. Class B subfamily. In terms of tissue distribution, highly expressed in inflorescences. Expressed in vascular bundles of root stele within the elongation zones, of elongating upper internodes and of the junctions of leaf blades and sheaths.

Probable transcription factor that regulates organogenesis during transition from the vegetative to the reproductive phase. Regulates the expression of CYP78A11/PLA1, HD3A and MADS1 during reproductive development in rice. May act upstream of CYP78A11/PLA1 during panicle development. Acts independently of the photoperiodic and gibberellin signaling pathways. This is GATA transcription factor 15 from Oryza sativa subsp. japonica (Rice).